We begin with the raw amino-acid sequence, 945 residues long: Kinesin-like protein KIN-7F (945 aa).

The region spanning 34–356 (RILVSVRLRP…LLFASCAKEV (323 aa)) is the Kinesin motor domain. Residue 120–127 (GQTSSGKT) participates in ATP binding. A coiled-coil region spans residues 365–437 (VMSDKALVKQ…QDLLQVVGDN (73 aa)). Disordered stretches follow at residues 484–512 (RRVAQREHKPQQAENNVQFTTPSRYSVSS) and 553–588 (NECLESSAVGSNSLQDPNAGSSMHINNDSNSSMNSR). 2 stretches are compositionally biased toward polar residues: residues 495 to 512 (QAENNVQFTTPSRYSVSS) and 560 to 587 (AVGSNSLQDPNAGSSMHINNDSNSSMNS).

It belongs to the TRAFAC class myosin-kinesin ATPase superfamily. Kinesin family. KIN-7 subfamily. In terms of assembly, binds microtubules.

In terms of biological role, binds ATP/ADP in vitro. Possesses low ATPase activity but high affinity for microtubules. The chain is Kinesin-like protein KIN-7F from Oryza sativa subsp. japonica (Rice).